Consider the following 106-residue polypeptide: QNSIIFLINNGGYTIEVEIHDGPYNVIKNWNYTGLVEAFHNGEGACYTAKVRTEEELTEALEAALGPKKDCLCFIEVIVHKDDTSKELLEWGSRVSAANSRPPNPQ.

Positions 10 and 12 each coordinate Mg(2+).

Belongs to the TPP enzyme family. In terms of assembly, homotetramer. A metal cation is required as a cofactor. It depends on thiamine diphosphate as a cofactor.

It catalyses the reaction a 2-oxocarboxylate + H(+) = an aldehyde + CO2. The chain is Pyruvate decarboxylase 2 (PDC2) from Zea mays (Maize).